The chain runs to 173 residues: Peptide deformylase (173 aa).

Cys-98 and His-140 together coordinate Fe cation. Residue Glu-141 is part of the active site. His-144 contacts Fe cation.

It belongs to the polypeptide deformylase family. Fe(2+) serves as cofactor.

It catalyses the reaction N-terminal N-formyl-L-methionyl-[peptide] + H2O = N-terminal L-methionyl-[peptide] + formate. Removes the formyl group from the N-terminal Met of newly synthesized proteins. Requires at least a dipeptide for an efficient rate of reaction. N-terminal L-methionine is a prerequisite for activity but the enzyme has broad specificity at other positions. The chain is Peptide deformylase from Caulobacter sp. (strain K31).